The chain runs to 705 residues: FAD-dependent monooxygenase ATEG_03635 (705 aa).

FAD-binding positions include 86–115 (DVLI…IVDK), valine 208, 308–310 (RFY), and serine 408.

The protein belongs to the PheA/TfdB FAD monooxygenase family. FAD is required as a cofactor.

Its pathway is secondary metabolite biosynthesis. In terms of biological role, FAD-dependent monooxygenase; part of the cluster A that mediates the biosynthesis of azasperpyranones, members of the azaphilone family that exhibit anti-cancer activities. Azasperpyranones are synthesized by 2 clusters, A and B. Cluster A is responsible for the production of the polyhydric phenol moiety while the azaphilonoid scaffold is produced by the cluster B. The non-reducing polyketide synthase ATEG_03629 produces 5-methyl orsellinic acid, which is then reduced to 5-methyl orsellinic aldehyde by the NRPS-like protein ATEG_03630. 5-methyl orsellinic aldehyde is then first hydroxylated by the FAD-dependent monooxygenase ATEG_03635 and subsequently hydroxylated by the cytochrome P450 monooxygenase ATEG_03631 to produce the unstable polyhydric phenol precursor of azasperpyranones. On the other hand, the polyketide synthase ATEG_07659 is responsible for producing the 3,5-dimethyloctadienone moiety from acetyl-CoA, three malonyl-CoA, and two S-adenosyl methionines (SAM). The 3,5-dimethyloctadienone moiety is then loaded onto the SAT domain of ATEG_07661 and extended with four malonyl-CoA and one SAM, which leads to the formation of 2,4-dihydroxy-6-(5,7-dimethyl-2-oxo-trans-3-trans-5-nonadienyl)-3-methylbenzaldehyde (compound 8) after reductive release and aldol condensation. The FAD-dependent monooxygenase ATEG_07662 is the next enzyme in the biosynthesis sequence and hydroxylates the side chain at the benzylic position of compound 8. In Aspergillus nidulans, afoF, the ortholog of the FAD-dependent oxygenase ATEG_07660, is the key enzyme for the biosynthesis of asperfuranone by catalyzing the hydroxylation at C-8 of to prevent the formation of a six-membered ring hemiacetal intermediate and thus facilitating the formation of a five-membered ring to produce asperfuranone. In Aspergillus terreus, ATEG_07660 is probably not functional, which leads to the formation of the six-membered ring hemiacetal intermediate presperpyranone instead of asperfuranone. Finally, ATEG_03636 is involved in the condensation of the polyhydric phenol moiety produced by cluster A and the perasperpyranone precursor produced by cluster B, to yield azasperpyranone A. Further modifications of azasperpyranone A result in the production of derivatives, including azasperpyranone B to F. The chain is FAD-dependent monooxygenase ATEG_03635 from Aspergillus terreus (strain NIH 2624 / FGSC A1156).